Consider the following 586-residue polypeptide: YTH domain-containing family protein 2 (586 aa).

3 disordered regions span residues 98–128 (LKEKVKQSRALRQSVNNAAEQQPSTKPQPVQ), 141–181 (SQDQ…KESP), and 301–464 (QGLA…PLVS). 3 stretches are compositionally biased toward polar residues: residues 107–128 (ALRQSVNNAAEQQPSTKPQPVQ), 169–181 (TLPTTPRTIKESP), and 352–368 (SSQAALSCKSKQSTDIQ). Basic residues predominate over residues 398–418 (CARRHRSSSPRGRSGSHKSRR). A compositionally biased stretch (polar residues) spans 421–436 (TDSPVSRSTTKSTPSR). The YTH domain occupies 435-576 (SRARQPGHRD…YCGRDLLRLM (142 aa)). The span at 441 to 458 (GHRDYREYRDDRNRDTKP) shows a compositional bias: basic and acidic residues.

The protein belongs to the YTHDF family. YTHDF1 subfamily.

In terms of biological role, specifically recognizes and binds N6-methyladenosine (m6A)-containing mRNAs, and regulates their stability. M6A is a modification present at internal sites of mRNAs and some non-coding RNAs and plays a role in mRNA stability and processing. Plays a role in pathogenicity towards plant host. In Pyricularia oryzae (strain 70-15 / ATCC MYA-4617 / FGSC 8958) (Rice blast fungus), this protein is YTH domain-containing family protein 2.